A 332-amino-acid polypeptide reads, in one-letter code: Anthranilate phosphoribosyltransferase (332 aa).

5-phospho-alpha-D-ribose 1-diphosphate contacts are provided by residues Gly78, 81–82 (GD), Ser86, 88–91 (NIST), 106–114 (KHGNKSITS), and Ser118. Gly78 provides a ligand contact to anthranilate. Mg(2+) is bound at residue Ser90. Asn109 contacts anthranilate. Arg163 is an anthranilate binding site. Positions 222 and 223 each coordinate Mg(2+).

This sequence belongs to the anthranilate phosphoribosyltransferase family. As to quaternary structure, homodimer. It depends on Mg(2+) as a cofactor.

It carries out the reaction N-(5-phospho-beta-D-ribosyl)anthranilate + diphosphate = 5-phospho-alpha-D-ribose 1-diphosphate + anthranilate. It participates in amino-acid biosynthesis; L-tryptophan biosynthesis; L-tryptophan from chorismate: step 2/5. Catalyzes the transfer of the phosphoribosyl group of 5-phosphorylribose-1-pyrophosphate (PRPP) to anthranilate to yield N-(5'-phosphoribosyl)-anthranilate (PRA). The chain is Anthranilate phosphoribosyltransferase from Staphylococcus aureus (strain USA300).